Reading from the N-terminus, the 599-residue chain is Elongation factor 4 (599 aa).

The tr-type G domain maps to 2–185 (KYIRNFSIIA…RIIIDIPVPQ (184 aa)). GTP contacts are provided by residues 14-19 (NHGKST) and 132-135 (NKID).

The protein belongs to the TRAFAC class translation factor GTPase superfamily. Classic translation factor GTPase family. LepA subfamily.

The protein resides in the cell inner membrane. The enzyme catalyses GTP + H2O = GDP + phosphate + H(+). In terms of biological role, required for accurate and efficient protein synthesis under certain stress conditions. May act as a fidelity factor of the translation reaction, by catalyzing a one-codon backward translocation of tRNAs on improperly translocated ribosomes. Back-translocation proceeds from a post-translocation (POST) complex to a pre-translocation (PRE) complex, thus giving elongation factor G a second chance to translocate the tRNAs correctly. Binds to ribosomes in a GTP-dependent manner. This is Elongation factor 4 from Blochmanniella floridana.